The sequence spans 280 residues: 2-dehydro-3-deoxyphosphooctonate aldolase (280 aa).

It belongs to the KdsA family.

It localises to the cytoplasm. It catalyses the reaction D-arabinose 5-phosphate + phosphoenolpyruvate + H2O = 3-deoxy-alpha-D-manno-2-octulosonate-8-phosphate + phosphate. It functions in the pathway carbohydrate biosynthesis; 3-deoxy-D-manno-octulosonate biosynthesis; 3-deoxy-D-manno-octulosonate from D-ribulose 5-phosphate: step 2/3. It participates in bacterial outer membrane biogenesis; lipopolysaccharide biosynthesis. This Thiobacillus denitrificans (strain ATCC 25259 / T1) protein is 2-dehydro-3-deoxyphosphooctonate aldolase.